A 407-amino-acid polypeptide reads, in one-letter code: Substance-P receptor (407 aa).

At 1 to 31 the chain is on the extracellular side; the sequence is MDNVLQVDSDLFPNISTNTSEPNQFVQPAWQ. N-linked (GlcNAc...) asparagine glycosylation is found at asparagine 14 and asparagine 18. Residues 32-54 form a helical membrane-spanning segment; it reads IVLWAAAYTVIVVTSVVGNVVVM. The Cytoplasmic segment spans residues 55-64; sequence WIILAHKRMR. A helical membrane pass occupies residues 65–86; sequence TVTNYFLVNLAFAEASMAAFNT. The Extracellular segment spans residues 87 to 106; that stretch reads VVNFTYAVHNEWYYGLFYCK. Cysteine 105 and cysteine 180 are oxidised to a cystine. Residues 107–128 traverse the membrane as a helical segment; it reads FHNFFPIAAVFASIYSMTAVAF. The Cytoplasmic portion of the chain corresponds to 129 to 148; that stretch reads DRYMAIIHPLQPRLSATATK. The helical transmembrane segment at 149-169 threads the bilayer; it reads VVICVIWVLALLLAFPQGYYS. The Extracellular portion of the chain corresponds to 170–194; sequence TTETMPNRVVCMIEWPEHPNKIYEK. A helical membrane pass occupies residues 195-219; it reads VYHICVTVLIYFLPLLVIGYAYTVV. The Cytoplasmic portion of the chain corresponds to 220–248; it reads GITLWASEIPGDSSDRYHEQVSAKRKVVK. Residues 249–270 traverse the membrane as a helical segment; that stretch reads MMIVVVCTFAICWLPFHIFFLL. The Extracellular portion of the chain corresponds to 271 to 283; that stretch reads PYINPDLYLEKFI. Residues 284–308 traverse the membrane as a helical segment; it reads QQVYLAIMWLAMSSTMYNPIIYCCL. At 309 to 407 the chain is on the cytoplasmic side; sequence NDRFRLGFKH…SFSFYSNMLS (99 aa). Cysteine 322 is lipidated: S-palmitoyl cysteine. The disordered stretch occupies residues 365-394; that stretch reads HEEELEDGPKTTPSSLDLTSNGSSRSDSKT. Residues 375–394 show a composition bias toward polar residues; the sequence is TTPSSLDLTSNGSSRSDSKT.

It belongs to the G-protein coupled receptor 1 family. As to quaternary structure, interacts with ARRB1.

It localises to the cell membrane. This is a receptor for the tachykinin neuropeptide substance P. It is probably associated with G proteins that activate a phosphatidylinositol-calcium second messenger system. The polypeptide is Substance-P receptor (TACR1) (Canis lupus familiaris (Dog)).